A 290-amino-acid chain; its full sequence is 6-carboxyhexanoate--CoA ligase (290 aa).

It belongs to the BioW family. In terms of assembly, homodimer. It depends on Mg(2+) as a cofactor.

The enzyme catalyses heptanedioate + ATP + CoA = 6-carboxyhexanoyl-CoA + AMP + diphosphate. The protein operates within metabolic intermediate metabolism; pimeloyl-CoA biosynthesis; pimeloyl-CoA from pimelate: step 1/1. Its function is as follows. Catalyzes the transformation of pimelate into pimeloyl-CoA with concomitant hydrolysis of ATP to AMP. This chain is 6-carboxyhexanoate--CoA ligase, found in Bacillus amyloliquefaciens (Bacillus velezensis).